The primary structure comprises 260 residues: Small ribosomal subunit protein uS2 (260 aa).

Belongs to the universal ribosomal protein uS2 family.

The polypeptide is Small ribosomal subunit protein uS2 (rpsB) (Borreliella burgdorferi (strain ATCC 35210 / DSM 4680 / CIP 102532 / B31) (Borrelia burgdorferi)).